Consider the following 371-residue polypeptide: Cytochrome b (371 aa).

The next 4 membrane-spanning stretches (helical) occupy residues 25–45 (FGSM…FLAV), 69–90 (WMMQ…YIHI), 105–125 (WMSG…GYVL), and 170–190 (FFAL…LHII). The heme b site is built by His-75 and His-89. Residues His-174 and His-188 each contribute to the heme b site. His-193 contacts a ubiquinone. The next 4 membrane-spanning stretches (helical) occupy residues 218-238 (HKDL…VSFF), 280-300 (LGGA…PFTH), 312-332 (LSQL…WAAT), and 339-358 (FIAI…LSIP).

It belongs to the cytochrome b family. In terms of assembly, the cytochrome bc1 complex contains 3 respiratory subunits (MT-CYB, CYC1 and UQCRFS1), 2 core proteins (UQCRC1 and UQCRC2) and probably 6 low-molecular weight proteins. Heme b serves as cofactor.

It localises to the mitochondrion inner membrane. Component of the ubiquinol-cytochrome c reductase complex (complex III or cytochrome b-c1 complex) that is part of the mitochondrial respiratory chain. The b-c1 complex mediates electron transfer from ubiquinol to cytochrome c. Contributes to the generation of a proton gradient across the mitochondrial membrane that is then used for ATP synthesis. This is Cytochrome b (MT-CYB) from Liasis olivaceus (Olive python).